The chain runs to 432 residues: Adenylosuccinate synthetase (432 aa).

GTP is bound by residues 13–19 and 41–43; these read GDEGKGK and GHT. Asp14 acts as the Proton acceptor in catalysis. Asp14 and Gly41 together coordinate Mg(2+). Residues 14-17, 39-42, Thr130, Arg144, Gln225, Thr240, and Arg304 contribute to the IMP site; these read DEGK and NAGH. His42 serves as the catalytic Proton donor. 300 to 306 is a substrate binding site; sequence ATTGRRR. GTP-binding positions include Arg306, 332–334, and 415–417; these read KLD and STG.

This sequence belongs to the adenylosuccinate synthetase family. As to quaternary structure, homodimer. Mg(2+) is required as a cofactor.

It localises to the cytoplasm. The catalysed reaction is IMP + L-aspartate + GTP = N(6)-(1,2-dicarboxyethyl)-AMP + GDP + phosphate + 2 H(+). Its pathway is purine metabolism; AMP biosynthesis via de novo pathway; AMP from IMP: step 1/2. Its function is as follows. Plays an important role in the de novo pathway of purine nucleotide biosynthesis. Catalyzes the first committed step in the biosynthesis of AMP from IMP. This is Adenylosuccinate synthetase from Serratia proteamaculans (strain 568).